The primary structure comprises 908 residues: Collagen alpha-2(I) chain (908 aa).

Over residues 1–36 the composition is skewed to low complexity; the sequence is GPMGIMGPRGPPGASGAPGPAGEPGEPGQTGPAGAR. Disordered stretches follow at residues 1 to 211 and 227 to 908; these read GPMG…GITG and IPGP…PGPS. A compositionally biased stretch (basic and acidic residues) spans 45–59; sequence AGEDGHPGKPGRPGE. Composition is skewed to low complexity over residues 129–158, 183–197, 234–249, 293–309, 403–418, 465–474, 526–542, and 569–589; these read VGAPGPAGARGSDGSVGPVGPAGPIGSAGP, AGPRGEVGIPGVSGP, PGPVGAAGATGARGIV, STGPTGPPGIRGSRGIP, AGIAGARGPAGPPGFQ, PAGPIGSRGP, RRGAPGAIGAPGPAGAN, and VGPAGPNGFAGPAGAAGQPGA. Residues 590–599 show a composition bias toward basic and acidic residues; it reads KGERGTKGPK. A compositionally biased stretch (low complexity) spans 602–617; that stretch reads NGPVGPTGPVGAAGPA. A compositionally biased stretch (gly residues) spans 627-636; the sequence is GSRGDGGPPG. Composition is skewed to low complexity over residues 637–647, 701–730, 745–775, and 785–805; these read ATGFPGAAGRT, AGEPGTAGIPGTPGPQGIIGAPGIIGIPGS, EPGPIGIAGPPGARGPPGAVGNPGVNGAPGE, and PGPAGSVGPAGAVGPRGPSGP. A compositionally biased stretch (basic and acidic residues) spans 809–820; that stretch reads RGDKGEPGDKGP. Residues 893–908 are compositionally biased toward pro residues; that stretch reads AGPPGPPGPPGPPGPS.

It belongs to the fibrillar collagen family. As to quaternary structure, trimers of one alpha 2(I) and two alpha 1(I) chains. Interacts (via C-terminus) with TMEM131 (via PapD-L domain); the interaction is direct and is involved in assembly and TRAPPIII ER-to-Golgi transport complex-dependent secretion of collagen. In terms of processing, prolines at the third position of the tripeptide repeating unit (G-X-Y) are hydroxylated in some or all of the chains. As to expression, forms the fibrils of tendon, ligaments and bones. In bones, the fibrils are mineralized with calcium hydroxyapatite.

Its subcellular location is the secreted. It localises to the extracellular space. The protein resides in the extracellular matrix. Its function is as follows. Type I collagen is a member of group I collagen (fibrillar forming collagen). In Toxodon sp, this protein is Collagen alpha-2(I) chain.